Reading from the N-terminus, the 455-residue chain is MGAEEEEEPASAVGREGGGGGGGARAAGAGAGGDTADDDDSGESAAAVVPCSICLDAVVAGGGDRSTARLQCGHEFHLDCIGSAFNAKGVMQCPNCRQIERGNWLYANGSRPSQDVSNDDWGHDEDFYDANQPETSRSVFLPFRFQWCPIGRLAQLPSVFDEGESAPPVTFHDFMGQNFTSEHLPVSAPGATPPGPYIAYFQPLQSSASSSSSHVTERTMDGTTYHDHWNPLPGPSDGRPLATVHPIDFHHNHWTHLPNSYSQPNSNNGVAEQMAIPVVPMRVGGLDSDSQQRGSLPSVYGNGSGSRSRIPSVPPMAPQFMRPHGNINEQYQQNSSSLYAAPQRRTAVQAVQDSMNFTLFPQAPTGPNSMETEDAGGNQFYAWERDRFAPYPLMPVDSEANWWGSTPQSHGVTDHSAAPGRRLFGQWIGAGRSPPPPPPPPADNSSYRQMHIPRM.

Positions methionine 1–glycine 42 are disordered. The segment covering arginine 15–glycine 33 has biased composition (gly residues). The RING-type; atypical zinc-finger motif lies at cysteine 51–arginine 97. Disordered regions lie at residues leucine 286–proline 311 and glutamine 426–methionine 455. A compositionally biased stretch (pro residues) spans serine 433 to alanine 442.

Interacts with SPL14/IPA1.

The protein localises to the nucleus. It carries out the reaction S-ubiquitinyl-[E2 ubiquitin-conjugating enzyme]-L-cysteine + [acceptor protein]-L-lysine = [E2 ubiquitin-conjugating enzyme]-L-cysteine + N(6)-ubiquitinyl-[acceptor protein]-L-lysine.. The protein operates within protein modification; protein ubiquitination. Functions as an E3 ligase that promotes polyubiquitination of SPL14/IPA1 for subsequent proteasomal degradation. Regulates plant architecture by modulating SPL14/IPA1 abundance. Promotes the degradation of SPL14/IPA1 in panicles, while it stabilizes SPL14/IPA1 in shoot apices. Ubiquitinates the SPL14/IPA1-mediated complex with 'Lys-48'-linked polyubiquitin in panicles and 'Lys-63'-linked polyubiquitin chains in the shoot apex. This chain is E3 ubiquitin-protein ligase IPI1, found in Oryza sativa subsp. japonica (Rice).